We begin with the raw amino-acid sequence, 71 residues long: Serine palmitoyltransferase small subunit A (71 aa).

The Cytoplasmic portion of the chain corresponds to Met1–Gln12. Residues Met13–Leu29 form a helical membrane-spanning segment. The Lumenal portion of the chain corresponds to Glu30–Arg34. Residues Thr35–Pro57 form a helical membrane-spanning segment. Topologically, residues Gln58–Gln71 are cytoplasmic.

Belongs to the SPTSS family. SPTSSA subfamily. In terms of assembly, component of the serine palmitoyltransferase (SPT) complex, which is composed of SPTLC1, SPTLC2 or SPTLC3 and SPTSSA or SPTSSB. The heterodimer consisting of SPTLC1 and SPTLC2/SPTLC3 forms the catalytic core of the enzyme, while SPTSSA or SPTSSB subunits determine substrate specificity. SPT also interacts with ORMDL proteins, especially ORMDL3, which negatively regulate SPT activity in the presence of ceramides. Interacts with MBOAT7; the interaction plays a role in MBOAT7 localization to mitochondria-associated membranes.

The protein resides in the endoplasmic reticulum membrane. It participates in lipid metabolism; sphingolipid metabolism. Component of the serine palmitoyltransferase multisubunit enzyme (SPT) that catalyzes the initial and rate-limiting step in sphingolipid biosynthesis by condensing L-serine and activated acyl-CoA (most commonly palmitoyl-CoA) to form long-chain bases. The SPT complex is composed of SPTLC1, SPTLC2 or SPTLC3 and SPTSSA or SPTSSB. Within this complex, the heterodimer consisting of SPTLC1 and SPTLC2/SPTLC3 forms the catalytic core. Within the SPT complex, SPTSSA stimulates the catalytic activity and plays a role in substrate specificity, which depends upon the overall complex composition. The SPTLC1-SPTLC2-SPTSSA complex shows a strong preference for C16-CoA substrate, while the SPTLC1-SPTLC3-SPTSSA isozyme uses both C14-CoA and C16-CoA as substrates, with a slight preference for C14-CoA. Independently of its action as a SPT component, may be involved in MBOAT7 localization to mitochondria-associated membranes, a membrane bridge between the endoplasmic reticulum and mitochondria, may hence affect MBOAT7-catalyzed incorporation of arachidonic acid into phosphatidylinositol. In Mus musculus (Mouse), this protein is Serine palmitoyltransferase small subunit A.